A 292-amino-acid chain; its full sequence is 4-hydroxy-tetrahydrodipicolinate synthase (292 aa).

Threonine 45 is a pyruvate binding site. Tyrosine 133 serves as the catalytic Proton donor/acceptor. The Schiff-base intermediate with substrate role is filled by lysine 161. Residue isoleucine 203 coordinates pyruvate.

This sequence belongs to the DapA family. Homodimer.

It is found in the cytoplasm. The catalysed reaction is L-aspartate 4-semialdehyde + pyruvate = (2S,4S)-4-hydroxy-2,3,4,5-tetrahydrodipicolinate + H2O + H(+). Its pathway is amino-acid biosynthesis; L-lysine biosynthesis via DAP pathway; (S)-tetrahydrodipicolinate from L-aspartate: step 3/4. In terms of biological role, catalyzes the condensation of (S)-aspartate-beta-semialdehyde [(S)-ASA] and pyruvate to 4-hydroxy-tetrahydrodipicolinate (HTPA). This chain is 4-hydroxy-tetrahydrodipicolinate synthase, found in Pseudomonas syringae pv. syringae (strain B728a).